The primary structure comprises 727 residues: Probable glutamate carboxypeptidase ARB_02390 (727 aa).

An N-terminal signal peptide occupies residues 1-18 (MIVKSLSLLALAAATVEG). Asn-60 and Asn-80 each carry an N-linked (GlcNAc...) asparagine glycan. The region spanning 158 to 296 (ATAEYVYVGR…ISQLDAQPIL (139 aa)) is the PA domain. Residue Arg-197 coordinates substrate. The N-linked (GlcNAc...) asparagine glycan is linked to Asn-223. Positions 255–279 (FPGDPTTPGYPSRPDSPRKDKSPVV) are disordered. Positions 261 and 264 each coordinate Ca(2+). Residues 266–565 (SRPDSPRKDK…QFLGLLGYHL (300 aa)) form an NAALADase region. Residues Asn-310, Asn-319, and Asn-353 are each glycosylated (N-linked (GlcNAc...) asparagine). His-366 contributes to the Zn(2+) binding site. Glu-414 functions as the For NAALADase activity in the catalytic mechanism. Glu-415 is a binding site for Zn(2+). Positions 423 and 426 each coordinate Ca(2+). Position 443 (Asp-443) interacts with Zn(2+). Substrate is bound by residues 516 to 518 (TGA) and Tyr-530. His-531 provides a ligand contact to Zn(2+). Residue Ser-604 is the Charge relay system of the active site. The N-linked (GlcNAc...) asparagine glycan is linked to Asn-614. Catalysis depends on His-665, which acts as the Charge relay system. 675-676 (GY) contributes to the substrate binding site. Asn-692 carries an N-linked (GlcNAc...) asparagine glycan.

It belongs to the peptidase M28 family. M28B subfamily. Zn(2+) is required as a cofactor.

The protein resides in the secreted. The catalysed reaction is Release of an unsubstituted, C-terminal glutamyl residue, typically from Ac-Asp-Glu or folylpoly-gamma-glutamates.. In terms of biological role, has both folate hydrolase and N-acetylated-alpha-linked-acidic dipeptidase (NAALADase) activity. Also exhibits a dipeptidyl-peptidase IV type activity. The sequence is that of Probable glutamate carboxypeptidase ARB_02390 from Arthroderma benhamiae (strain ATCC MYA-4681 / CBS 112371) (Trichophyton mentagrophytes).